We begin with the raw amino-acid sequence, 307 residues long: Aspartate carbamoyltransferase catalytic subunit (307 aa).

Carbamoyl phosphate contacts are provided by Arg54 and Thr55. Lys83 provides a ligand contact to L-aspartate. Arg104, His132, and Gln135 together coordinate carbamoyl phosphate. Positions 165 and 228 each coordinate L-aspartate. Leu267 and Pro268 together coordinate carbamoyl phosphate.

It belongs to the aspartate/ornithine carbamoyltransferase superfamily. ATCase family. As to quaternary structure, heterododecamer (2C3:3R2) of six catalytic PyrB chains organized as two trimers (C3), and six regulatory PyrI chains organized as three dimers (R2).

The enzyme catalyses carbamoyl phosphate + L-aspartate = N-carbamoyl-L-aspartate + phosphate + H(+). The protein operates within pyrimidine metabolism; UMP biosynthesis via de novo pathway; (S)-dihydroorotate from bicarbonate: step 2/3. Catalyzes the condensation of carbamoyl phosphate and aspartate to form carbamoyl aspartate and inorganic phosphate, the committed step in the de novo pyrimidine nucleotide biosynthesis pathway. The sequence is that of Aspartate carbamoyltransferase catalytic subunit from Clostridium botulinum (strain Eklund 17B / Type B).